The sequence spans 701 residues: Elongation factor G 2 (701 aa).

The 284-residue stretch at 8-291 (ERYRNIGISA…AVIDYLPSPA (284 aa)) folds into the tr-type G domain. GTP-binding positions include 17–24 (AHIDAGKT), 88–92 (DTPGH), and 142–145 (NKMD).

The protein belongs to the TRAFAC class translation factor GTPase superfamily. Classic translation factor GTPase family. EF-G/EF-2 subfamily.

Its subcellular location is the cytoplasm. Its function is as follows. Catalyzes the GTP-dependent ribosomal translocation step during translation elongation. During this step, the ribosome changes from the pre-translocational (PRE) to the post-translocational (POST) state as the newly formed A-site-bound peptidyl-tRNA and P-site-bound deacylated tRNA move to the P and E sites, respectively. Catalyzes the coordinated movement of the two tRNA molecules, the mRNA and conformational changes in the ribosome. In Burkholderia lata (strain ATCC 17760 / DSM 23089 / LMG 22485 / NCIMB 9086 / R18194 / 383), this protein is Elongation factor G 2.